Consider the following 242-residue polypeptide: Octanoyltransferase (242 aa).

In terms of domain architecture, BPL/LPL catalytic spans 31 to 206 (SQTTDEIWFL…LFLKNFGYNQ (176 aa)). Substrate-binding positions include 70–77 (RGGQVTYH), 137–139 (SIG), and 150–152 (GLA). Catalysis depends on C168, which acts as the Acyl-thioester intermediate.

Belongs to the LipB family.

Its subcellular location is the cytoplasm. It catalyses the reaction octanoyl-[ACP] + L-lysyl-[protein] = N(6)-octanoyl-L-lysyl-[protein] + holo-[ACP] + H(+). Its pathway is protein modification; protein lipoylation via endogenous pathway; protein N(6)-(lipoyl)lysine from octanoyl-[acyl-carrier-protein]: step 1/2. In terms of biological role, catalyzes the transfer of endogenously produced octanoic acid from octanoyl-acyl-carrier-protein onto the lipoyl domains of lipoate-dependent enzymes. Lipoyl-ACP can also act as a substrate although octanoyl-ACP is likely to be the physiological substrate. In Coxiella burnetii (strain CbuG_Q212) (Coxiella burnetii (strain Q212)), this protein is Octanoyltransferase.